Here is a 209-residue protein sequence, read N- to C-terminus: Uracil phosphoribosyltransferase (209 aa).

5-phospho-alpha-D-ribose 1-diphosphate contacts are provided by residues arginine 79, arginine 104, and aspartate 131–serine 139. Uracil-binding positions include isoleucine 194 and glycine 199–alanine 201. A 5-phospho-alpha-D-ribose 1-diphosphate-binding site is contributed by aspartate 200.

It belongs to the UPRTase family. Mg(2+) serves as cofactor.

It catalyses the reaction UMP + diphosphate = 5-phospho-alpha-D-ribose 1-diphosphate + uracil. Its pathway is pyrimidine metabolism; UMP biosynthesis via salvage pathway; UMP from uracil: step 1/1. Its activity is regulated as follows. Allosterically activated by GTP. Catalyzes the conversion of uracil and 5-phospho-alpha-D-ribose 1-diphosphate (PRPP) to UMP and diphosphate. The chain is Uracil phosphoribosyltransferase from Lactiplantibacillus plantarum (strain ATCC BAA-793 / NCIMB 8826 / WCFS1) (Lactobacillus plantarum).